A 254-amino-acid polypeptide reads, in one-letter code: Receptor expression-enhancing protein 3 (254 aa).

3 consecutive transmembrane segments (helical) span residues Met-1–Tyr-21, Tyr-35–Ala-55, and Leu-59–Pro-79. The segment at Asp-162–Lys-232 is disordered. Residues Glu-198 to Glu-212 show a composition bias toward acidic residues. Thr-200 is subject to Phosphothreonine. The residue at position 209 (Ser-209) is a Phosphoserine.

Belongs to the DP1 family.

It is found in the endoplasmic reticulum membrane. Its function is as follows. Microtubule-binding protein required to ensure proper cell division and nuclear envelope reassembly by sequestering the endoplasmic reticulum away from chromosomes during mitosis. Probably acts by clearing the endoplasmic reticulum membrane from metaphase chromosomes. In Mus musculus (Mouse), this protein is Receptor expression-enhancing protein 3 (Reep3).